The primary structure comprises 581 residues: Mitosis inhibitor protein kinase mik1 (581 aa).

Disordered regions lie at residues 43 to 71 (GHEE…HTPM) and 148 to 178 (NLTN…PLSP). Residues 59–71 (KPSNTKRSPHTPM) are compositionally biased toward polar residues. The segment covering 160 to 169 (PCKKGTKIKL) has biased composition (basic residues). The Protein kinase domain maps to 289–561 (FQQVKPIHES…LLAMPEMIFI (273 aa)). ATP is bound by residues 295–303 (IHESDFSFV) and K320. Residue D417 is the Proton acceptor of the active site. N422 and D435 together coordinate Mg(2+).

It belongs to the protein kinase superfamily. Ser/Thr protein kinase family. WEE1 subfamily.

It catalyses the reaction L-seryl-[protein] + ATP = O-phospho-L-seryl-[protein] + ADP + H(+). It carries out the reaction L-threonyl-[protein] + ATP = O-phospho-L-threonyl-[protein] + ADP + H(+). Its function is as follows. Protein kinase that acts both on serines and on tyrosines. It acts as a negative regulator of entry into mitosis (G2 to M transition). Phosphorylates and inhibits cdc2. This Schizosaccharomyces pombe (strain 972 / ATCC 24843) (Fission yeast) protein is Mitosis inhibitor protein kinase mik1 (mik1).